The sequence spans 75 residues: Small ribosomal subunit protein bS18 (75 aa).

This sequence belongs to the bacterial ribosomal protein bS18 family. In terms of assembly, part of the 30S ribosomal subunit. Forms a tight heterodimer with protein bS6.

Its function is as follows. Binds as a heterodimer with protein bS6 to the central domain of the 16S rRNA, where it helps stabilize the platform of the 30S subunit. The protein is Small ribosomal subunit protein bS18 of Laribacter hongkongensis (strain HLHK9).